The sequence spans 232 residues: Phosphatidylserine decarboxylase proenzyme (232 aa).

Ser-190 acts as the Schiff-base intermediate with substrate; via pyruvic acid in catalysis. Ser-190 carries the pyruvic acid (Ser); by autocatalysis modification.

It belongs to the phosphatidylserine decarboxylase family. PSD-A subfamily. Heterodimer of a large membrane-associated beta subunit and a small pyruvoyl-containing alpha subunit. The cofactor is pyruvate. In terms of processing, is synthesized initially as an inactive proenzyme. Formation of the active enzyme involves a self-maturation process in which the active site pyruvoyl group is generated from an internal serine residue via an autocatalytic post-translational modification. Two non-identical subunits are generated from the proenzyme in this reaction, and the pyruvate is formed at the N-terminus of the alpha chain, which is derived from the carboxyl end of the proenzyme. The post-translation cleavage follows an unusual pathway, termed non-hydrolytic serinolysis, in which the side chain hydroxyl group of the serine supplies its oxygen atom to form the C-terminus of the beta chain, while the remainder of the serine residue undergoes an oxidative deamination to produce ammonia and the pyruvoyl prosthetic group on the alpha chain.

The protein localises to the cell membrane. The catalysed reaction is a 1,2-diacyl-sn-glycero-3-phospho-L-serine + H(+) = a 1,2-diacyl-sn-glycero-3-phosphoethanolamine + CO2. It participates in phospholipid metabolism; phosphatidylethanolamine biosynthesis; phosphatidylethanolamine from CDP-diacylglycerol: step 2/2. Catalyzes the formation of phosphatidylethanolamine (PtdEtn) from phosphatidylserine (PtdSer). In Rhizobium etli (strain ATCC 51251 / DSM 11541 / JCM 21823 / NBRC 15573 / CFN 42), this protein is Phosphatidylserine decarboxylase proenzyme.